A 706-amino-acid polypeptide reads, in one-letter code: Sodium- and chloride-dependent glycine transporter 1 (706 aa).

The interval 1-26 (MSGGDTRAAIARPRMAAAHGPVAPSS) is disordered. Residues 1–108 (MSGGDTRAAI…KRGNWGNQIE (108 aa)) lie on the Cytoplasmic side of the membrane. Over residues 7-18 (RAAIARPRMAAA) the composition is skewed to low complexity. A run of 3 helical transmembrane segments spans residues 109 to 129 (FVLT…FPYL), 136 to 156 (GAFM…LFFM), and 188 to 208 (VSTY…YYFF). Residues 209–285 (SSMTHVLPWA…LSDDIGNFGE (77 aa)) lie on the Extracellular side of the membrane. The next 9 helical transmembrane spans lie at 286–306 (VRLP…LCLI), 315–335 (VVYF…VRGV), 360–380 (VWGD…GGLI), 407–427 (SVYA…HLGV), 450–470 (LLPI…LLGL), 506–526 (VAGF…WLLL), 530–550 (YAAS…IMYI), 570–590 (LFFQ…ILVF), and 610–630 (VAIG…YAMF). Topologically, residues 631–706 (RLCRTDGDTL…GSSRLQDSRI (76 aa)) are cytoplasmic. 2 positions are modified to phosphoserine: S673 and S698. The segment at 695 to 706 (SNGSSRLQDSRI) is essential for interaction with EXOC1.

It belongs to the sodium:neurotransmitter symporter (SNF) (TC 2.A.22) family. SLC6A9 subfamily. As to quaternary structure, interacts with EXOC1; interaction increases the transporter capacity of SLC6A9 probably by promoting its insertion into the cell membrane. Interacts with EXOC3 and EXOC4. Expressed in the brain, kidney, pancreas, lung, placenta and liver. As to expression, expressed only in the brain.

It localises to the cell membrane. The enzyme catalyses glycine(out) + chloride(out) + 2 Na(+)(out) = glycine(in) + chloride(in) + 2 Na(+)(in). Its activity is regulated as follows. Inhibited by sarcosine. In terms of biological role, sodium- and chloride-dependent glycine transporter. Essential for regulating glycine concentrations at inhibitory glycinergic synapses. Sodium- and chloride-dependent glycine transporter. This chain is Sodium- and chloride-dependent glycine transporter 1 (SLC6A9), found in Homo sapiens (Human).